Reading from the N-terminus, the 596-residue chain is Phosphoenolpyruvate carboxykinase [GTP] (596 aa).

Substrate-binding positions include Arg77 and 205-207 (YGG). 2 residues coordinate Mn(2+): Lys214 and His234. Position 256 (Ser256) interacts with substrate. 257–262 (ACGKTN) provides a ligand contact to GTP. Cys258 is a catalytic residue. Asp283 contacts Mn(2+). Residues 362–388 (KKGSTEKAAHPNSRFTAPAKNNPAISP) form a disordered region. 373-375 (NSR) lines the substrate pocket. GTP contacts are provided by residues Arg375, Arg406, and 499-502 (YGDN).

It belongs to the phosphoenolpyruvate carboxykinase [GTP] family. Monomer. Mn(2+) serves as cofactor.

It localises to the cytoplasm. The catalysed reaction is oxaloacetate + GTP = phosphoenolpyruvate + GDP + CO2. Its pathway is carbohydrate biosynthesis; gluconeogenesis. Its function is as follows. Catalyzes the conversion of oxaloacetate (OAA) to phosphoenolpyruvate (PEP), the rate-limiting step in the metabolic pathway that produces glucose from lactate and other precursors derived from the citric acid cycle. This Anaeromyxobacter sp. (strain K) protein is Phosphoenolpyruvate carboxykinase [GTP].